The sequence spans 218 residues: Small ribosomal subunit protein uS3c (218 aa).

The KH type-2 domain maps to 47–118 (VQKHMRISSG…RLNITITRIA (72 aa)).

It belongs to the universal ribosomal protein uS3 family. In terms of assembly, part of the 30S ribosomal subunit.

Its subcellular location is the plastid. The protein resides in the chloroplast. This chain is Small ribosomal subunit protein uS3c (rps3), found in Amborella trichopoda.